The following is a 211-amino-acid chain: Uracil phosphoribosyltransferase (211 aa).

Residues Arg78, Arg103, and Asp130–Thr138 each bind 5-phospho-alpha-D-ribose 1-diphosphate. Residues Ile195 and Gly200–Ala202 each bind uracil. Asp201 provides a ligand contact to 5-phospho-alpha-D-ribose 1-diphosphate.

This sequence belongs to the UPRTase family. It depends on Mg(2+) as a cofactor.

It catalyses the reaction UMP + diphosphate = 5-phospho-alpha-D-ribose 1-diphosphate + uracil. Its pathway is pyrimidine metabolism; UMP biosynthesis via salvage pathway; UMP from uracil: step 1/1. Allosterically activated by GTP. Functionally, catalyzes the conversion of uracil and 5-phospho-alpha-D-ribose 1-diphosphate (PRPP) to UMP and diphosphate. The polypeptide is Uracil phosphoribosyltransferase (Renibacterium salmoninarum (strain ATCC 33209 / DSM 20767 / JCM 11484 / NBRC 15589 / NCIMB 2235)).